A 310-amino-acid polypeptide reads, in one-letter code: Zinc finger protein unc-98 (310 aa).

A compositionally biased stretch (polar residues) spans 73–84 (GSSSAQTPTKSS). Residues 73–102 (GSSSAQTPTKSSGGALDGSDQQEVRQDGTS) are disordered. 2 C2H2-type zinc fingers span residues 113–135 (YKCR…ERIH) and 141–163 (YVCG…AAQH). The C2H2-type 3; degenerate zinc finger occupies 169 to 188 (YKCECGRTFFSYTEMLYHKH). The tract at residues 198-310 (APETTTIKVS…RTSGYVTPRF (113 aa)) is interaction with myo-3. The C2H2-type 4 zinc finger occupies 246–268 (YICEYCSKSYSDSRGLAYHMYSH).

As to quaternary structure, interacts with hum-6, mep-1, myo-3, unc-96 and unc-97/PINCH. In terms of tissue distribution, expressed in embryos from 1.5- to 2-fold stage in myofibrils. In larvae and adults, it is expressed in body wall muscle, and in addition, anal depressor muscle and vulval muscles. More specifically it is found in the thick filaments of muscle fibers.

Its subcellular location is the nucleus. The protein localises to the cytoplasm. In terms of biological role, probable transcription factor required for muscle structure. Its dual subcellular localization suggests that it may function both as a muscle adhesion complex protein and as a transcription factor, or work together with transcription factors, to influence gene expression. Thought to act as a molecular bridge between unc-97 and myo-3 at the M-line of muscles, possibly in a signaling role. Plays a role in the formation of muscle connections, also called muscle arm extensions, between the body wall and the motor axons in the dorsal and ventral cord. The chain is Zinc finger protein unc-98 (unc-98) from Caenorhabditis elegans.